We begin with the raw amino-acid sequence, 452 residues long: Methionine aminopeptidase 2 (452 aa).

A disordered region spans residues 1–91 (MTGVTGTEDT…KNKKKKKKKI (91 aa)). Residues 8–38 (EDTKVIESKINELNIDKSKPEKTNKVNKSDD) show a composition bias toward basic and acidic residues. A compositionally biased stretch (acidic residues) spans 39-62 (VDNDDVDNDDNDDEDNDDDDDEIT). A compositionally biased stretch (basic residues) spans 74-91 (KKKKKNKNKNKKKKKKKI). Residue His203 participates in substrate binding. Positions 223, 234, and 305 each coordinate a divalent metal cation. His313 provides a ligand contact to substrate. Positions 338 and 433 each coordinate a divalent metal cation.

The protein belongs to the peptidase M24A family. Methionine aminopeptidase eukaryotic type 2 subfamily. It depends on Co(2+) as a cofactor. Requires Zn(2+) as cofactor. Mn(2+) is required as a cofactor. Fe(2+) serves as cofactor.

It localises to the cytoplasm. The enzyme catalyses Release of N-terminal amino acids, preferentially methionine, from peptides and arylamides.. Its function is as follows. Cotranslationally removes the N-terminal methionine from nascent proteins. The N-terminal methionine is often cleaved when the second residue in the primary sequence is small and uncharged (Met-Ala-, Cys, Gly, Pro, Ser, Thr, or Val). The sequence is that of Methionine aminopeptidase 2 from Candida dubliniensis (strain CD36 / ATCC MYA-646 / CBS 7987 / NCPF 3949 / NRRL Y-17841) (Yeast).